We begin with the raw amino-acid sequence, 240 residues long: C-type lectin domain family 4 member A (240 aa).

Over 1–48 (MASEITYAEVRIKNESNSSVTYSGSPAAPREKPTRHLSKPGSLLVPFT) the chain is Cytoplasmic. The short motif at 5-10 (ITYAEV) is the ITIM motif element. Residues 18–38 (SSVTYSGSPAAPREKPTRHLS) are disordered. A helical; Signal-anchor for type II membrane protein transmembrane segment spans residues 49 to 69 (SLMVLLLLLAITFLVAFIIYF). Topologically, residues 70 to 240 (QKYSQFLEEK…SVCQMKKIQL (171 aa)) are extracellular. Cystine bridges form between Cys107/Cys118, Cys140/Cys233, and Cys208/Cys225. The region spanning 129–235 (SKASWSESEK…SGKQQSVCQM (107 aa)) is the C-type lectin domain. Ca(2+) contacts are provided by Val149 and Glu155. A glycan (N-linked (GlcNAc...) asparagine) is linked at Asn190. Ca(2+)-binding residues include Glu200, Ser202, and Glu206. Alpha-D-mannopyranose contacts are provided by residues 200–202 (EPS) and Glu206. 211–213 (INH) provides a ligand contact to N-acetyl-D-glucosamine. The Ca(2+) site is built by Asn221 and Asp222.

In terms of assembly, may interact with PTPN6 via its ITIM site. Expressed by myeloid cells (dendritic cells, macrophages, and neutrophils) and B-cells.

The protein resides in the cell membrane. In terms of biological role, C-type lectin receptor that binds carbohydrates mannose and fucose but also weakly interacts with N-acetylglucosamine (GlcNAc) in a Ca(2+)-dependent manner. Involved in regulating immune reactivity. Once triggered by antigen, it is internalized by clathrin-dependent endocytosis and delivers its antigenic cargo into the antigen presentation pathway resulting in cross-priming of CD8(+) T cells. This cross-presentation and cross-priming are enhanced by TLR7 and TLR8 agonists with increased expansion of the CD8(+) T cells, high production of IFNG and TNF with reduced levels of IL4, IL5 and IL13. In plasmacytoid dendritic cells, inhibits TLR9-mediated IFNA and TNF production. May be involved via its ITIM motif (immunoreceptor tyrosine-based inhibitory motifs) in the inhibition of B-cell-receptor-mediated calcium mobilization and protein tyrosine phosphorylation. The polypeptide is C-type lectin domain family 4 member A (Clec4a) (Rattus norvegicus (Rat)).